A 579-amino-acid chain; its full sequence is Plastidial pyruvate kinase 2 (579 aa).

The transit peptide at 1–63 directs the protein to the chloroplast; sequence MAQVVATRSI…SRRVVDTTVR (63 aa). Positions 6–24 are enriched in polar residues; sequence ATRSIQGSMLSPNGGSVST. Residues 6 to 26 form a disordered region; the sequence is ATRSIQGSMLSPNGGSVSTRS. R140 is a binding site for substrate. Residues N142, S144, D175, and T176 each contribute to the K(+) site. Residue 142–145 participates in ATP binding; sequence NMSH. R182 provides a ligand contact to ATP. K325 is a binding site for substrate. E327 is a Mg(2+) binding site. Positions 350, 351, and 383 each coordinate substrate. D351 provides a ligand contact to Mg(2+).

The protein belongs to the pyruvate kinase family. Oligomer of alpha and beta subunits. Mg(2+) is required as a cofactor. K(+) serves as cofactor. In terms of tissue distribution, mostly expressed in seeds, and, to a lower extent, in roots, leaves (veins and trichomes), inflorescences, siliques, pollen (grains and tubes) and flowers (sepals and petals).

Its subcellular location is the plastid. It localises to the chloroplast stroma. The protein resides in the mitochondrion. It carries out the reaction pyruvate + ATP = phosphoenolpyruvate + ADP + H(+). The protein operates within carbohydrate degradation; glycolysis; pyruvate from D-glyceraldehyde 3-phosphate: step 5/5. Its function is as follows. Required for plastidial pyruvate kinase activity. Involved in seed oil accumulation, embryo development and seed storage compounds mobilization upon germination. In Arabidopsis thaliana (Mouse-ear cress), this protein is Plastidial pyruvate kinase 2 (PKP2).